A 69-amino-acid polypeptide reads, in one-letter code: Toxin Tz2 (69 aa).

Positions Ile-1–Gly-7 are cleaved as a signal peptide. An LCN-type CS-alpha/beta domain is found at Lys-8–Cys-69. Intrachain disulfides connect Cys-19-Cys-69, Cys-23-Cys-45, Cys-31-Cys-50, and Cys-35-Cys-52.

Belongs to the long (4 C-C) scorpion toxin superfamily. Sodium channel inhibitor family. Beta subfamily. In terms of tissue distribution, expressed by the venom gland.

The protein localises to the secreted. Its function is as follows. Beta toxins bind voltage-independently at site-4 of sodium channels (Nav) and shift the voltage of activation toward more negative potentials thereby affecting sodium channel activation and promoting spontaneous and repetitive firing. The polypeptide is Toxin Tz2 (Tityus zulianus (Venezuelan scorpion)).